Here is a 383-residue protein sequence, read N- to C-terminus: S-adenosylmethionine synthase (383 aa).

His15 contacts ATP. Asp17 is a Mg(2+) binding site. Glu43 contacts K(+). Residues Glu56 and Gln99 each coordinate L-methionine. A flexible loop region spans residues 99 to 109; sequence QSPDINQGVDK. ATP contacts are provided by residues 164–166, 230–231, Asp239, 245–246, Ala262, and Lys266; these read DAK, RF, and RK. Asp239 lines the L-methionine pocket. Position 270 (Lys270) interacts with L-methionine.

It belongs to the AdoMet synthase family. Homotetramer; dimer of dimers. Requires Mg(2+) as cofactor. K(+) is required as a cofactor.

The protein localises to the cytoplasm. It catalyses the reaction L-methionine + ATP + H2O = S-adenosyl-L-methionine + phosphate + diphosphate. Its pathway is amino-acid biosynthesis; S-adenosyl-L-methionine biosynthesis; S-adenosyl-L-methionine from L-methionine: step 1/1. Functionally, catalyzes the formation of S-adenosylmethionine (AdoMet) from methionine and ATP. The overall synthetic reaction is composed of two sequential steps, AdoMet formation and the subsequent tripolyphosphate hydrolysis which occurs prior to release of AdoMet from the enzyme. In Vibrio atlanticus (strain LGP32) (Vibrio splendidus (strain Mel32)), this protein is S-adenosylmethionine synthase.